The chain runs to 277 residues: Caspase-3 (277 aa).

Position 1 is an N-acetylmethionine (methionine 1). 2 consecutive propeptides follow at residues 1-9 (MENNKTSVD) and 10-28 (SKSI…KSMD). An N6-acetyllysine modification is found at lysine 11. Position 26 is a phosphoserine (serine 26). Residues histidine 121 and cysteine 163 contribute to the active site. Cysteine 163 is modified (S-nitrosocysteine; in inhibited form).

It belongs to the peptidase C14A family. As to quaternary structure, heterotetramer that consists of two anti-parallel arranged heterodimers, each one formed by a 17 kDa (p17) and a 12 kDa (p12) subunit. Interacts with BIRC6/bruce. In terms of assembly, (Microbial infection) Subunit p17 interacts with African swine fever virus (ASFV) inhibitor of apoptosis protein. Cleavage by granzyme B, caspase-6, caspase-8 and caspase-10 generates the two active subunits. Additional processing of the propeptides is likely due to the autocatalytic activity of the activated protease. Active heterodimers between the small subunit of caspase-7 protease and the large subunit of caspase-3 also occur and vice versa. Post-translationally, S-nitrosylated on its catalytic site cysteine in unstimulated cell lines and denitrosylated upon activation of the Fas apoptotic pathway, associated with an increase in intracellular caspase activity. Fas therefore activates caspase-3 not only by inducing the cleavage of the caspase zymogen to its active subunits, but also by stimulating the denitrosylation of its active site thiol. In terms of processing, ubiquitinated by BIRC6; this activity is inhibited by DIABLO/SMAC.

The protein resides in the cytoplasm. The enzyme catalyses Strict requirement for an Asp residue at positions P1 and P4. It has a preferred cleavage sequence of Asp-Xaa-Xaa-Asp-|- with a hydrophobic amino-acid residue at P2 and a hydrophilic amino-acid residue at P3, although Val or Ala are also accepted at this position.. Its activity is regulated as follows. Inhibited by BIRC6; following inhibition of BIRC6-caspase binding by DIABLO/SMAC, BIRC6 is subjected to caspase cleavage, leading to an increase in active caspases. Its function is as follows. Involved in the activation cascade of caspases responsible for apoptosis execution. At the onset of apoptosis, it proteolytically cleaves poly(ADP-ribose) polymerase PARP1 at a '216-Asp-|-Gly-217' bond. Cleaves and activates sterol regulatory element binding proteins (SREBPs) between the basic helix-loop-helix leucine zipper domain and the membrane attachment domain. Cleaves and activates caspase-6, -7 and -9 (CASP6, CASP7 and CASP9, respectively). Cleaves and inactivates interleukin-18 (IL18). Triggers cell adhesion in sympathetic neurons through RET cleavage. Cleaves IL-1 beta between an Asp and an Ala, releasing the mature cytokine which is involved in a variety of inflammatory processes. Cleaves and inhibits serine/threonine-protein kinase AKT1 in response to oxidative stress. Acts as an inhibitor of type I interferon production during virus-induced apoptosis by mediating cleavage of antiviral proteins CGAS, IRF3 and MAVS, thereby preventing cytokine overproduction. Also involved in pyroptosis by mediating cleavage and activation of gasdermin-E (GSDME). Cleaves XRCC4 and phospholipid scramblase proteins XKR4, XKR8 and XKR9, leading to promote phosphatidylserine exposure on apoptotic cell surface. Cleaves BIRC6 following inhibition of BIRC6-caspase binding by DIABLO/SMAC. The protein is Caspase-3 (CASP3) of Sus scrofa (Pig).